Consider the following 417-residue polypeptide: Serine--tRNA ligase (417 aa).

232 to 234 (TAE) is an L-serine binding site. ATP-binding positions include 263 to 265 (RRE) and V279. E286 is a binding site for L-serine. An ATP-binding site is contributed by 350–353 (EISS). L-serine is bound at residue S385.

The protein belongs to the class-II aminoacyl-tRNA synthetase family. Type-1 seryl-tRNA synthetase subfamily. Homodimer. The tRNA molecule binds across the dimer.

Its subcellular location is the cytoplasm. The catalysed reaction is tRNA(Ser) + L-serine + ATP = L-seryl-tRNA(Ser) + AMP + diphosphate + H(+). It catalyses the reaction tRNA(Sec) + L-serine + ATP = L-seryl-tRNA(Sec) + AMP + diphosphate + H(+). It functions in the pathway aminoacyl-tRNA biosynthesis; selenocysteinyl-tRNA(Sec) biosynthesis; L-seryl-tRNA(Sec) from L-serine and tRNA(Sec): step 1/1. Functionally, catalyzes the attachment of serine to tRNA(Ser). Is also able to aminoacylate tRNA(Sec) with serine, to form the misacylated tRNA L-seryl-tRNA(Sec), which will be further converted into selenocysteinyl-tRNA(Sec). The protein is Serine--tRNA ligase of Leptospira borgpetersenii serovar Hardjo-bovis (strain JB197).